The primary structure comprises 305 residues: Divergent heme oxygenase-like protein (305 aa).

Positions 1–18 (MIRKIIILMFTFFSNIHN) are cleaved as a signal peptide. Positions 1–83 (MIRKIIILMF…GVDKNNINYN (83 aa)) are sufficient for apicoplast targeting. N-linked (GlcNAc...) asparagine glycans are attached at residues asparagine 132, asparagine 159, and asparagine 288.

Proteolytically cleaved; targeted by its N-terminal leader sequence for import into the apicoplast where it undergoes proteolytic processing, resulting in an N-terminus starting at or near Gly-33 in the mature protein.

It localises to the plastid. The protein localises to the apicoplast. In terms of biological role, essential for blood-stage parasite viability. Required for apicoplast biogenesis. Associates with the apicoplast genome and mediates apicoplast gene expression. Can bind heme. Can bind protoporphyrin IX. In Plasmodium falciparum (isolate 3D7), this protein is Divergent heme oxygenase-like protein.